The primary structure comprises 224 residues: Large ribosomal subunit protein uL3 (224 aa).

At Gln-159 the chain carries N5-methylglutamine.

This sequence belongs to the universal ribosomal protein uL3 family. In terms of assembly, part of the 50S ribosomal subunit. Forms a cluster with proteins L14 and L19. Post-translationally, methylated by PrmB.

One of the primary rRNA binding proteins, it binds directly near the 3'-end of the 23S rRNA, where it nucleates assembly of the 50S subunit. The protein is Large ribosomal subunit protein uL3 of Janthinobacterium sp. (strain Marseille) (Minibacterium massiliensis).